A 424-amino-acid chain; its full sequence is GTPase Obg (424 aa).

The region spanning 1 to 158 is the Obg domain; it reads MFVDRAEVFV…RYISLELKIL (158 aa). Residues 21–42 are disordered; the sequence is SFRREKYVPRGGPDGGDGGKGG. Over residues 32-42 the composition is skewed to gly residues; sequence GPDGGDGGKGG. Residues 159–331 enclose the OBG-type G domain; the sequence is ADVGLLGFPN…LMKEAAAMLT (173 aa). Residues 165–172, 190–194, 212–215, 282–285, and 312–314 contribute to the GTP site; these read GFPNVGKS, FTTLS, DIPG, NKAD, and SAA. The Mg(2+) site is built by serine 172 and threonine 192. Residues 345 to 424 form the OCT domain; that stretch reads KFIPEEKRFT…LNDFEFDYIL (80 aa).

The protein belongs to the TRAFAC class OBG-HflX-like GTPase superfamily. OBG GTPase family. In terms of assembly, monomer. Mg(2+) is required as a cofactor.

It localises to the cytoplasm. An essential GTPase which binds GTP, GDP and possibly (p)ppGpp with moderate affinity, with high nucleotide exchange rates and a fairly low GTP hydrolysis rate. Plays a role in control of the cell cycle, stress response, ribosome biogenesis and in those bacteria that undergo differentiation, in morphogenesis control. In Clostridium kluyveri (strain NBRC 12016), this protein is GTPase Obg.